The following is a 125-amino-acid chain: Ixonnexin (125 aa).

Positions 1 to 21 are cleaved as a signal peptide; it reads MGLTGTTLVLVCVAFFGSAAA. A glycan (N-linked (GlcNAc...) asparagine) is linked at Asn26. Residues 81–125 form a disordered region; it reads TSSGGPDDTGDNTPPPTEKPKQKKKKPKKTKKPKRKSKKDQKENF. Positions 101 to 119 are enriched in basic residues; that stretch reads KQKKKKPKKTKKPKRKSKK.

Belongs to the salp14 family. As to quaternary structure, homodimer. Interacts with host PLG. Interacts with host PLAT. As to expression, saliva (at protein level).

The protein localises to the secreted. Salivary protein that promotes host fibrinolysis via accelerating host plasmin generation from plasminogen (PLG) initiated by tPA/tissue-type plasminogen activator (PLAT). Does not affect urokinase (PLAU)-mediated fibrinolysis in the host. Enhances amidolytic activity of host coagulation factor Xa (F10). In Ixodes scapularis (Black-legged tick), this protein is Ixonnexin.